The sequence spans 311 residues: Putative ribose-phosphate pyrophosphokinase 2 (311 aa).

Residues 38 to 40 (DGE) and 97 to 98 (RQ) contribute to the ATP site. 2 residues coordinate Mg(2+): His-131 and Asp-171. Position 219 (Asp-219) interacts with D-ribose 5-phosphate.

It belongs to the ribose-phosphate pyrophosphokinase family. Class I subfamily. Homohexamer. It depends on Mg(2+) as a cofactor.

The protein resides in the cytoplasm. It catalyses the reaction D-ribose 5-phosphate + ATP = 5-phospho-alpha-D-ribose 1-diphosphate + AMP + H(+). Its pathway is metabolic intermediate biosynthesis; 5-phospho-alpha-D-ribose 1-diphosphate biosynthesis; 5-phospho-alpha-D-ribose 1-diphosphate from D-ribose 5-phosphate (route I): step 1/1. Involved in the biosynthesis of the central metabolite phospho-alpha-D-ribosyl-1-pyrophosphate (PRPP) via the transfer of pyrophosphoryl group from ATP to 1-hydroxyl of ribose-5-phosphate (Rib-5-P). In Listeria innocua serovar 6a (strain ATCC BAA-680 / CLIP 11262), this protein is Putative ribose-phosphate pyrophosphokinase 2.